An 868-amino-acid polypeptide reads, in one-letter code: Translation initiation factor IF-2 (868 aa).

2 disordered regions span residues 158 to 178 (VKEE…DELT) and 200 to 269 (KKEE…KYRE). The segment covering 200-209 (KKEEVKPEKV) has biased composition (basic and acidic residues). Positions 249–260 (RGGRSKFKKKKG) are enriched in basic residues. Residues 368–537 (GRAPVVTIMG…LLQSEVLELK (170 aa)) enclose the tr-type G domain. The G1 stretch occupies residues 377–384 (GHVDHGKT). A GTP-binding site is contributed by 377–384 (GHVDHGKT). The interval 402–406 (GITQH) is G2. The segment at 423 to 426 (DTPG) is G3. Residues 423-427 (DTPGH) and 477-480 (NKMD) each bind GTP. The tract at residues 477-480 (NKMD) is G4. Residues 513–515 (SAK) form a G5 region.

It belongs to the TRAFAC class translation factor GTPase superfamily. Classic translation factor GTPase family. IF-2 subfamily.

The protein resides in the cytoplasm. Its function is as follows. One of the essential components for the initiation of protein synthesis. Protects formylmethionyl-tRNA from spontaneous hydrolysis and promotes its binding to the 30S ribosomal subunits. Also involved in the hydrolysis of GTP during the formation of the 70S ribosomal complex. The polypeptide is Translation initiation factor IF-2 (Legionella pneumophila (strain Lens)).